Here is a 628-residue protein sequence, read N- to C-terminus: EF-hand calcium-binding domain-containing protein 7 (628 aa).

Residues 1–22 (MASNPGSDAALGTQNPLLSGSP) are compositionally biased toward polar residues. The disordered stretch occupies residues 1-24 (MASNPGSDAALGTQNPLLSGSPRT). 2 EF-hand domains span residues 102–137 (TSKAELLKSFKKLDVNDDGAILHSDLQKYLTKRGEK) and 138–173 (MTQEEVNAVINLADINANGKFDYVKFCKLYMTTSEQ). A disordered region spans residues 192 to 231 (QFGSHMEGSPERGPSPAPKPSPRVIRKNDQETFSSKGDTS). Residues serine 200 and serine 212 each carry the phosphoserine modification. Polar residues predominate over residues 222–231 (ETFSSKGDTS). The EF-hand 3 domain maps to 402–437 (EFRSTLSEIFEVIDLDGNGLISLEEYNFFELRTSGE). 4 residues coordinate Ca(2+): aspartate 415, aspartate 417, asparagine 419, and glutamate 426.

In terms of assembly, component of the EvC complex composed of EFCAB7, IQCE, EVC2 and EVC; built from two subcomplexes, EVC2:EVC and EFCAB7:IQCE. Interacts (via EF-hand 1 and 2) with IQCE (via N-terminus); this interaction anchors the EVC-EVC2 complex in a signaling microdomain at the base of cilia and stimulates the Hedgehog (Hh) pathway. Interacts with EVC2 (via N-terminal end). Interacts with EVC.

The protein resides in the cell projection. It localises to the cilium membrane. In terms of biological role, component of the EvC complex that positively regulates ciliary Hedgehog (Hh) signaling. Required for the localization of the EVC2:EVC subcomplex at the base of primary cilia. This chain is EF-hand calcium-binding domain-containing protein 7 (Efcab7), found in Mus musculus (Mouse).